The primary structure comprises 285 residues: Nucleotide-binding protein Pnap_0906 (285 aa).

8-15 (GMSGSGKS) provides a ligand contact to ATP. 57-60 (DVRS) contributes to the GTP binding site.

The protein belongs to the RapZ-like family.

Its function is as follows. Displays ATPase and GTPase activities. In Polaromonas naphthalenivorans (strain CJ2), this protein is Nucleotide-binding protein Pnap_0906.